We begin with the raw amino-acid sequence, 766 residues long: DNA ligase (766 aa).

Residues 1–30 (MSTVNAKGAKPATDANGQSLNPEEPSEALR) are disordered. NAD(+) is bound by residues 57–61 (DAEYD), 106–107 (SL), and Glu141. The active-site N6-AMP-lysine intermediate is Lys143. Positions 164, 201, 317, and 341 each coordinate NAD(+). Zn(2+) contacts are provided by Cys435, Cys438, Cys454, and Cys460. In terms of domain architecture, BRCT spans 669–758 (STPRTLEGVT…PEAFGDRADA (90 aa)). Residues 747 to 766 (QGPEAFGDRADAADQPAAGE) are disordered.

Belongs to the NAD-dependent DNA ligase family. LigA subfamily. Mg(2+) serves as cofactor. It depends on Mn(2+) as a cofactor.

The enzyme catalyses NAD(+) + (deoxyribonucleotide)n-3'-hydroxyl + 5'-phospho-(deoxyribonucleotide)m = (deoxyribonucleotide)n+m + AMP + beta-nicotinamide D-nucleotide.. DNA ligase that catalyzes the formation of phosphodiester linkages between 5'-phosphoryl and 3'-hydroxyl groups in double-stranded DNA using NAD as a coenzyme and as the energy source for the reaction. It is essential for DNA replication and repair of damaged DNA. This chain is DNA ligase, found in Kocuria rhizophila (strain ATCC 9341 / DSM 348 / NBRC 103217 / DC2201).